We begin with the raw amino-acid sequence, 287 residues long: Nuclease S1 (287 aa).

Residues 1–20 (MPRLLPISAATLALAQLTYG) form the signal peptide. A divalent metal cation contacts are provided by W21, H26, D65, and H80. Substrate is bound by residues 21–26 (WGNLGH), 65–71 (DTYKYTD), 80–83 (HFID), and 93–98 (GVDYDR). Intrachain disulfides connect C92–C236 and C100–C105. N-linked (GlcNAc...) asparagine glycans are attached at residues N112 and N122. The a divalent metal cation site is built by H135, D139, H145, H168, and D172. Residues 135-183 (HIIGDIHQPLHDENLEAGGNGIDVTYDGETTNLHHIWDTNMPEEAAGGY) are substrate binding. The N-linked (GlcNAc...) asparagine glycan is linked to N248.

This sequence belongs to the nuclease type I family. In terms of assembly, monomer. The cofactor is Zn(2+).

The catalysed reaction is Endonucleolytic cleavage to 5'-phosphomononucleotide and 5'-phosphooligonucleotide end-products.. Its activity is regulated as follows. Inhibited by inorganic phosphate (Pi). Functionally, hydrolyzes only single-stranded DNA and RNA without apparent specificity for bases. The protein is Nuclease S1 of Aspergillus oryzae (strain ATCC 42149 / RIB 40) (Yellow koji mold).